We begin with the raw amino-acid sequence, 500 residues long: Raftlin-2 (500 aa).

Gly-2 is lipidated: N-myristoyl glycine. Cys-3 is lipidated: S-palmitoyl cysteine. The segment at 203 to 236 (GHLSESGVEEEPQHESGQHQTERNSSPSYANPKR) is disordered. Positions 213–224 (EPQHESGQHQTE) are enriched in basic and acidic residues. Ser-404 carries the post-translational modification Phosphoserine. The tract at residues 406-500 (AQTPERKGSR…EEGVTQVTCM (95 aa)) is disordered. At Thr-408 the chain carries Phosphothreonine. The segment covering 409–424 (PERKGSRLLKGEDRNK) has biased composition (basic and acidic residues). Positions 426–438 (SSRSLGLDTNASQ) are enriched in polar residues. Ser-429 carries the post-translational modification Phosphoserine. The span at 467–478 (SDSFSGFSSSDS) shows a compositional bias: low complexity.

It belongs to the raftlin family. Expressed in B-cells, heart, brain, spleen, large intestine and lung. Expressed in dendritic cells and macrophages.

The protein resides in the cell membrane. In terms of biological role, upon bacterial lipopolysaccharide stimulation, mediates clathrin-dependent internalization of TLR4 in dendritic cells, resulting in activation of TICAM1-mediated signaling and subsequent IFNB1 production. May regulate B-cell antigen receptor-mediated signaling. In Mus musculus (Mouse), this protein is Raftlin-2 (Rftn2).